Reading from the N-terminus, the 84-residue chain is MTDKIRTVQGKVVSDKMDKSFVVAIERTVKHPIYGKFIRRTTKLHVHDENNEAKLGDVVEVKECRPLSKTKSHTLVRVVEKAVA.

Belongs to the universal ribosomal protein uS17 family. In terms of assembly, part of the 30S ribosomal subunit.

One of the primary rRNA binding proteins, it binds specifically to the 5'-end of 16S ribosomal RNA. The sequence is that of Small ribosomal subunit protein uS17 from Glaesserella parasuis serovar 5 (strain SH0165) (Haemophilus parasuis).